Consider the following 596-residue polypeptide: ATP-dependent lipid A-core flippase (596 aa).

Helical transmembrane passes span 34 to 54, 80 to 100, 138 to 158, 164 to 184, 263 to 283, and 292 to 312; these read VWVL…EAGI, AAVV…GYLL, AVVF…ITLV, VVFL…IVAI, QPLT…IAVV, and VGGF…LKHL. The ABC transmembrane type-1 domain maps to 38–321; sequence VAGVLAMAAV…LMDVNQPLQR (284 aa). The ABC transporter domain occupies 353–589; it reads IEFSHVSFSY…GGLYAHLHRI (237 aa). ATP is bound at residue 389–396; that stretch reads GPSGSGKT.

This sequence belongs to the ABC transporter superfamily. Lipid exporter (TC 3.A.1.106) family. Homodimer.

It is found in the cell inner membrane. It catalyses the reaction ATP + H2O + lipid A-core oligosaccharideSide 1 = ADP + phosphate + lipid A-core oligosaccharideSide 2.. In terms of biological role, involved in lipopolysaccharide (LPS) biosynthesis. Translocates lipid A-core from the inner to the outer leaflet of the inner membrane. Transmembrane domains (TMD) form a pore in the inner membrane and the ATP-binding domain (NBD) is responsible for energy generation. This chain is ATP-dependent lipid A-core flippase, found in Burkholderia thailandensis (strain ATCC 700388 / DSM 13276 / CCUG 48851 / CIP 106301 / E264).